A 391-amino-acid chain; its full sequence is Tryptophan synthase beta chain 2 (391 aa).

At K83 the chain carries N6-(pyridoxal phosphate)lysine.

This sequence belongs to the TrpB family. Tetramer of two alpha and two beta chains. Requires pyridoxal 5'-phosphate as cofactor.

The catalysed reaction is (1S,2R)-1-C-(indol-3-yl)glycerol 3-phosphate + L-serine = D-glyceraldehyde 3-phosphate + L-tryptophan + H2O. Its pathway is amino-acid biosynthesis; L-tryptophan biosynthesis; L-tryptophan from chorismate: step 5/5. In terms of biological role, the beta subunit is responsible for the synthesis of L-tryptophan from indole and L-serine. This Chlamydia caviae (strain ATCC VR-813 / DSM 19441 / 03DC25 / GPIC) (Chlamydophila caviae) protein is Tryptophan synthase beta chain 2 (trpB2).